The primary structure comprises 167 residues: UPF0225 protein VV1_2912 (167 aa).

It belongs to the UPF0225 family.

The chain is UPF0225 protein VV1_2912 from Vibrio vulnificus (strain CMCP6).